Consider the following 266-residue polypeptide: Gap junction beta-4 protein (266 aa).

Residues 2-13 (NWAFLQGLLSGV) lie within the membrane without spanning it. The Cytoplasmic segment spans residues 14–20 (NKYSTVL). A helical transmembrane segment spans residues 21–40 (SRIWLSVVFIFRVLVYVVAA). The Extracellular segment spans residues 41 to 73 (EEVWDDEQKDFVCNTKQPGCPNVCYDEFFPVSH). Disulfide bonds link C53-C175, C60-C169, and C64-C164. The chain crosses the membrane as a helical span at residues 74-94 (VRLWALQLILVTCPSLLVVMH). Topologically, residues 95-130 (VAYREERERKHHLKHGPNAPSLYDNLSKKRGGLWWT) are cytoplasmic. The chain crosses the membrane as a helical span at residues 131-151 (YLLSLIFKAAVDAGFLYIFHR). Over 152–184 (LYKDYDMPRVVACSVEPCPHTVDCYISRPTEKK) the chain is Extracellular. Residues 185–205 (VFTYFMVTTAAICILLNLSEV) form a helical membrane-spanning segment. Topologically, residues 206–266 (FYLVGKRCME…SAPVDAGGYP (61 aa)) are cytoplasmic.

Belongs to the connexin family. Beta-type (group I) subfamily. A hemichannel or connexon is composed of a hexamer of connexins. A functional gap junction is formed by the apposition of two hemichannels. Forms heteromeric channels with GJB2.

It localises to the cell membrane. Its subcellular location is the cell junction. The protein localises to the gap junction. Its function is as follows. Structural component of gap junctions. Gap junctions are dodecameric channels that connect the cytoplasm of adjoining cells. They are formed by the docking of two hexameric hemichannels, one from each cell membrane. Small molecules and ions diffuse from one cell to a neighboring cell via the central pore. The sequence is that of Gap junction beta-4 protein (GJB4) from Homo sapiens (Human).